The primary structure comprises 554 residues: Phosphomethylpyrimidine synthase (554 aa).

Residues Asn-188, Met-217, Tyr-246, His-282, 302–304 (SRG), 343–346 (DGLR), and Glu-382 contribute to the substrate site. His-386 contacts Zn(2+). Tyr-409 contacts substrate. His-450 provides a ligand contact to Zn(2+). [4Fe-4S] cluster-binding residues include Cys-530, Cys-533, and Cys-538.

This sequence belongs to the ThiC family. In terms of assembly, homodimer. The cofactor is [4Fe-4S] cluster.

The catalysed reaction is 5-amino-1-(5-phospho-beta-D-ribosyl)imidazole + S-adenosyl-L-methionine = 4-amino-2-methyl-5-(phosphooxymethyl)pyrimidine + CO + 5'-deoxyadenosine + formate + L-methionine + 3 H(+). The protein operates within cofactor biosynthesis; thiamine diphosphate biosynthesis. Its function is as follows. Catalyzes the synthesis of the hydroxymethylpyrimidine phosphate (HMP-P) moiety of thiamine from aminoimidazole ribotide (AIR) in a radical S-adenosyl-L-methionine (SAM)-dependent reaction. The chain is Phosphomethylpyrimidine synthase from Coxiella burnetii (strain CbuK_Q154) (Coxiella burnetii (strain Q154)).